A 263-amino-acid chain; its full sequence is 3-methyl-2-oxobutanoate hydroxymethyltransferase (263 aa).

Mg(2+) is bound by residues aspartate 45 and aspartate 84. 3-methyl-2-oxobutanoate contacts are provided by residues 45–46 (DS), aspartate 84, and lysine 112. Glutamate 114 is a binding site for Mg(2+). The active-site Proton acceptor is glutamate 180.

The protein belongs to the PanB family. As to quaternary structure, homodecamer; pentamer of dimers. The cofactor is Mg(2+).

It is found in the cytoplasm. It catalyses the reaction 3-methyl-2-oxobutanoate + (6R)-5,10-methylene-5,6,7,8-tetrahydrofolate + H2O = 2-dehydropantoate + (6S)-5,6,7,8-tetrahydrofolate. Its pathway is cofactor biosynthesis; (R)-pantothenate biosynthesis; (R)-pantoate from 3-methyl-2-oxobutanoate: step 1/2. Its function is as follows. Catalyzes the reversible reaction in which hydroxymethyl group from 5,10-methylenetetrahydrofolate is transferred onto alpha-ketoisovalerate to form ketopantoate. This chain is 3-methyl-2-oxobutanoate hydroxymethyltransferase, found in Salmonella arizonae (strain ATCC BAA-731 / CDC346-86 / RSK2980).